Consider the following 339-residue polypeptide: GTP 3',8-cyclase (339 aa).

The Radical SAM core domain occupies 20–241 (NFDRKFEYLR…WTQKQSLSHD (222 aa)). GTP is bound at residue Arg-29. [4Fe-4S] cluster is bound by residues Cys-36 and Cys-40. Tyr-42 contributes to the S-adenosyl-L-methionine binding site. Residue Cys-43 coordinates [4Fe-4S] cluster. Arg-78 contributes to the GTP binding site. S-adenosyl-L-methionine is bound at residue Gly-82. Position 109 (Thr-109) interacts with GTP. Ser-133 contacts S-adenosyl-L-methionine. Lys-170 is a binding site for GTP. An S-adenosyl-L-methionine-binding site is contributed by Met-204. 2 residues coordinate [4Fe-4S] cluster: Cys-267 and Cys-270. A GTP-binding site is contributed by 272–274 (RLR). Cys-284 contacts [4Fe-4S] cluster.

The protein belongs to the radical SAM superfamily. MoaA family. In terms of assembly, monomer and homodimer. [4Fe-4S] cluster serves as cofactor.

It carries out the reaction GTP + AH2 + S-adenosyl-L-methionine = (8S)-3',8-cyclo-7,8-dihydroguanosine 5'-triphosphate + 5'-deoxyadenosine + L-methionine + A + H(+). Its pathway is cofactor biosynthesis; molybdopterin biosynthesis. Its function is as follows. Catalyzes the cyclization of GTP to (8S)-3',8-cyclo-7,8-dihydroguanosine 5'-triphosphate. In Psychromonas ingrahamii (strain DSM 17664 / CCUG 51855 / 37), this protein is GTP 3',8-cyclase.